The following is a 151-amino-acid chain: Arginine repressor (151 aa).

It belongs to the ArgR family.

It is found in the cytoplasm. It functions in the pathway amino-acid biosynthesis; L-arginine biosynthesis [regulation]. In terms of biological role, regulates arginine biosynthesis genes. The polypeptide is Arginine repressor (Clostridium novyi (strain NT)).